The following is a 107-amino-acid chain: Large ribosomal subunit protein uL24 (107 aa).

Belongs to the universal ribosomal protein uL24 family. In terms of assembly, part of the 50S ribosomal subunit.

Functionally, one of two assembly initiator proteins, it binds directly to the 5'-end of the 23S rRNA, where it nucleates assembly of the 50S subunit. Its function is as follows. One of the proteins that surrounds the polypeptide exit tunnel on the outside of the subunit. The sequence is that of Large ribosomal subunit protein uL24 from Thermoanaerobacter pseudethanolicus (strain ATCC 33223 / 39E) (Clostridium thermohydrosulfuricum).